A 548-amino-acid polypeptide reads, in one-letter code: Non-structural protein NS1 (548 aa).

The protein belongs to the orbivirus non-structural protein NS1 family.

The chain is Non-structural protein NS1 (Segment-5) from Camelus dromedarius (Dromedary).